The sequence spans 364 residues: Chorismate synthase (364 aa).

2 residues coordinate NADP(+): Arg48 and Arg54. FMN is bound by residues 125 to 127 (RSS), Gly282, 297 to 301 (KPPAS), and Arg323.

This sequence belongs to the chorismate synthase family. As to quaternary structure, homotetramer. Requires FMNH2 as cofactor.

It catalyses the reaction 5-O-(1-carboxyvinyl)-3-phosphoshikimate = chorismate + phosphate. The protein operates within metabolic intermediate biosynthesis; chorismate biosynthesis; chorismate from D-erythrose 4-phosphate and phosphoenolpyruvate: step 7/7. Its function is as follows. Catalyzes the anti-1,4-elimination of the C-3 phosphate and the C-6 proR hydrogen from 5-enolpyruvylshikimate-3-phosphate (EPSP) to yield chorismate, which is the branch point compound that serves as the starting substrate for the three terminal pathways of aromatic amino acid biosynthesis. This reaction introduces a second double bond into the aromatic ring system. This is Chorismate synthase from Chloroflexus aurantiacus (strain ATCC 29366 / DSM 635 / J-10-fl).